Consider the following 245-residue polypeptide: 1-(5-phosphoribosyl)-5-[(5-phosphoribosylamino)methylideneamino] imidazole-4-carboxamide isomerase (245 aa).

Asp8 serves as the catalytic Proton acceptor. The active-site Proton donor is Asp130.

This sequence belongs to the HisA/HisF family.

Its subcellular location is the cytoplasm. The catalysed reaction is 1-(5-phospho-beta-D-ribosyl)-5-[(5-phospho-beta-D-ribosylamino)methylideneamino]imidazole-4-carboxamide = 5-[(5-phospho-1-deoxy-D-ribulos-1-ylimino)methylamino]-1-(5-phospho-beta-D-ribosyl)imidazole-4-carboxamide. The protein operates within amino-acid biosynthesis; L-histidine biosynthesis; L-histidine from 5-phospho-alpha-D-ribose 1-diphosphate: step 4/9. In Pseudomonas entomophila (strain L48), this protein is 1-(5-phosphoribosyl)-5-[(5-phosphoribosylamino)methylideneamino] imidazole-4-carboxamide isomerase.